The following is a 308-amino-acid chain: 50 kDa gamma-zein (308 aa).

A signal peptide spans 1-19 (MKLVLVVLAFIALVSSVSC). Residues 27 to 159 (CGQQQSHEQQ…QPQQPQQYQQ (133 aa)) form a disordered region. Positions 55-119 (HHQQQQHQQQ…QHHQQSQGHV (65 aa)) are enriched in low complexity. Over residues 120 to 129 (QQHEQSHEQH) the composition is skewed to basic and acidic residues. A compositionally biased stretch (low complexity) spans 130–159 (QGQSHEQQHQQQFQGHDKQQQPQQPQQYQQ). Cys-286 is lipidated: GPI-anchor amidated cysteine. Residues 287–308 (GLYHSYYQNNPCSSNDISGVCN) constitute a propeptide, removed in mature form.

It belongs to the gliadin/glutenin family. In terms of assembly, interacts with OP10 (via N-terminus).

The protein localises to the cell membrane. In terms of biological role, zeins are major seed storage proteins. The sequence is that of 50 kDa gamma-zein from Zea mays (Maize).